Consider the following 918-residue polypeptide: MASTWKPAEDYVLQLATLLQNCMSPNPEIRNNAMEAMENFQLQPEFLNYLCYILIEGESDDVLKQHYSLQDLQNNRATAGMLLKNSMLGGNNLIKSNSHDLGYVKSNIIHGLYNSNNNLVSNVTGIVITTLFSTYYRQHRDDPTGLQMLYQLLELTSNGNEPSIKALSKIMEDSAQFFQLEWSGNTKPMEALLDSFFRFISNPNFSPVIRSESVKCINTVIPLQTQSFIVRLDKFLEIIFQLAQNDENDLVRAQICISFSFLLEFRPDKLVSHLDGIVQFMLHLITTVNEEKVAIEACEFLHAFATSPNIPEHILQPYVKDIVPILLSKMVYNEESIVLLEASNDDDAFLEDKDEDIKPIAPRIVKKKEAGNGEDADDNEDDDDDDDDEDGDVDTQWNLRKCSAATLDVMTNILPHQVMDIAFPFLREHLGSDRWFIREATILALGAMAEGGMKYFNDGLPALIPFLVEQLNDKWAPVRKMTCWTLSRFSPWILQDHTEFLIPVLEPIINTLMDKKKDVQEAAISSVAVFIENADSELVETLFYSQLLTSFDKCLKYYKKKNLIILYDAIGRFAEKCALDETAMQIILPPLIEKWALLSDSDKELWPLLECLSCVASSLGERFMPMAPEVYNRAFRILCHCVELEAKSHQDPTIVVPEKDFIITSLDLIDGLVQGLGAHSQDLLFPQGTKDLTILKIMLECLQDPVHEVRQSCFALLGDIVYFFNSELVIGNLEDFLKLIGTEIMHNDDSDGTPAVINAIWALGLISERIDLNTYIIDMSRIILDLFTTNTQIVDSSVMENLSVTIGKMGLTHPEVFSSGAFANDSNWNKWCLSVNALDDVEEKSSAYMGFLKIINLTSTEVTMSNDTIHKIVTGLSSNVEANVFAQEIYTFLMNHSAQISAINFTPDEISFLQQFTS.

HEAT repeat units lie at residues 11 to 38 (YVLQ…EAME), 43 to 92 (QPEF…GGNN), 103 to 137 (YVKS…TYYR), 145 to 181 (GLQM…FQLE), 190 to 222 (EALL…TVIP), 235 to 263 (FLEI…SFLL), 275 to 303 (DGIV…FLHA), 320 to 413 (KDIV…MTNI), 421 to 449 (IAFP…GAMA), 461 to 488 (PALI…TLSR), 501 to 534 (LIPV…IENA), 542 to 577 (LFYS…AEKC), 583 to 620 (AMQI…SSLG), 628 to 678 (PEVY…GLGA), 694 to 725 (ILKI…YFFN), 777 to 814 (IDMS…LTHP), 825 to 858 (DSNW…INLT), and 867 to 900 (DTIH…SAQI). Residues 361 to 395 (APRIVKKKEAGNGEDADDNEDDDDDDDDEDGDVDT) are disordered. A compositionally biased stretch (acidic residues) spans 372 to 393 (NGEDADDNEDDDDDDDDEDGDV).

This sequence belongs to the importin beta family. Importin beta-2 subfamily. Interacts with Ran (GSP1); interacts specifically with the GTP-bound form of Ran (GTP-Ran), protecting it from GTP hydrolysis and nucleotide exchange. Interacts with nucleoporins NUP1, NUP100 and NUP116. Interacts with NAB2 and HRP1/NAB4; via their rg-NLS. Interacts with TFG2; via its PY-NLS.

It is found in the cytoplasm. The protein resides in the nucleus. The protein localises to the nuclear pore complex. In terms of biological role, functions in nuclear protein import as nuclear transport receptor. Serves as receptor for arginine/glycine-rich nuclear localization signals (rg-NLS) and PY-NLS in cargo substrates. Its predominant cargo substrate seems to be mRNA-binding proteins. Required for nuclear transport of NAB2, HRP1/NAB4 and TFG2. Mediates docking of the importin/substrate complex to the nuclear pore complex (NPC) through binding to repeat-containing nucleoporins. The complex is subsequently translocated through the pore by an energy requiring, Ran-dependent mechanism. At the nucleoplasmic side of the NPC, GTP-Ran binding leads to release of the cargo. Efficient GTP-Ran-mediated substrate release requires RNA. The importin is re-exported from the nucleus to the cytoplasm where GTP hydrolysis releases Ran from importin. The directionality of nuclear import is thought to be conferred by an asymmetric distribution of the GTP- and GDP-bound forms of Ran between the cytoplasm and nucleus. The chain is Importin subunit beta-2 from Saccharomyces cerevisiae (strain ATCC 204508 / S288c) (Baker's yeast).